We begin with the raw amino-acid sequence, 239 residues long: uncharacterized protein (239 aa).

The segment at 193-214 (RKRKLNLSDGENKAKSPYSSIS) is disordered.

It is found in the nucleus. This is an uncharacterized protein from Schizosaccharomyces pombe (strain 972 / ATCC 24843) (Fission yeast).